The primary structure comprises 450 residues: Isoleucine 2-epimerase (450 aa).

Residues 115 to 116, tyrosine 142, and 250 to 253 contribute to the pyridoxal 5'-phosphate site; these read GS and DEVN. N6-(pyridoxal phosphate)lysine is present on lysine 280. A pyridoxal 5'-phosphate-binding site is contributed by threonine 309.

It belongs to the class-III pyridoxal-phosphate-dependent aminotransferase family. In terms of assembly, homotetramer. It depends on pyridoxal 5'-phosphate as a cofactor.

The catalysed reaction is L-isoleucine = D-allo-isoleucine. Its function is as follows. Catalyzes the epimerization of L-isoleucine to D-allo-isoleucine and D-allo-isoleucine to L-isoleucine. Can also catalyze the racemization of many nonpolar amino acids, including leucine and valine. Does not have GABA aminotransferase activity. The protein is Isoleucine 2-epimerase of Lentilactobacillus buchneri (Lactobacillus buchneri).